The chain runs to 291 residues: Arabinogalactan O-methyltransferase 2 (291 aa).

The chain crosses the membrane as a helical span at residues 18 to 38; it reads WFLAVALAGLIGGAMLITSFI.

It belongs to the methyltransferase superfamily.

It localises to the golgi apparatus membrane. Functionally, involved in the methylation of glucuronic acid of different plant cell wall component, but mainly on side chains of arabinogalactans. The polypeptide is Arabinogalactan O-methyltransferase 2 (Arabidopsis thaliana (Mouse-ear cress)).